An 883-amino-acid chain; its full sequence is Valine--tRNA ligase (883 aa).

A 'HIGH' region motif is present at residues 46–56; sequence PNVTGKLHLGH. The short motif at 520-524 is the 'KMSKS' region element; the sequence is KMSKS. Lys-523 is an ATP binding site. Residues 809 to 844 are a coiled coil; that stretch reads LADLLNVEEELARLEKELAKWQKELDMVGKKLSNER.

The protein belongs to the class-I aminoacyl-tRNA synthetase family. ValS type 1 subfamily. In terms of assembly, monomer.

The protein localises to the cytoplasm. It carries out the reaction tRNA(Val) + L-valine + ATP = L-valyl-tRNA(Val) + AMP + diphosphate. Catalyzes the attachment of valine to tRNA(Val). As ValRS can inadvertently accommodate and process structurally similar amino acids such as threonine, to avoid such errors, it has a 'posttransfer' editing activity that hydrolyzes mischarged Thr-tRNA(Val) in a tRNA-dependent manner. This chain is Valine--tRNA ligase, found in Streptococcus thermophilus (strain CNRZ 1066).